The chain runs to 315 residues: Transcriptional regulator protein Pur-beta (315 aa).

The interval 1–39 is disordered; sequence MADGDSGSERGGGGPGSFQPAPRGGGGPGGEQETQELAS. A2 is subject to N-acetylalanine. Residues S6 and S8 each carry the phosphoserine modification. The residue at position 23 (R23) is an Omega-N-methylarginine. The segment at 28–254 is DNA-binding; sequence PGGEQETQEL…GVFLRVSEVK (227 aa). Phosphothreonine is present on T34. S104 bears the Phosphoserine mark. The residue at position 155 (R155) is an Omega-N-methylarginine. The tract at residues 200–220 is disordered; the sequence is DDELAGGPGGGAGGPGGGLYG. Over residues 205–219 the composition is skewed to gly residues; it reads GGPGGGAGGPGGGLY. K270 bears the N6-acetyllysine mark. Residues 288 to 298 are compositionally biased toward basic and acidic residues; that stretch reads RQRDKLYERRG. Residues 288–315 are disordered; sequence RQRDKLYERRGGGSGGGDESEGEEVDED. R297 carries the omega-N-methylarginine modification. A phosphoserine mark is found at S301 and S307. Positions 305–315 are enriched in acidic residues; that stretch reads DESEGEEVDED.

Belongs to the PUR DNA-binding protein family. Homodimer, heterodimer with PURA and heterotrimer with PURA and YBX1/Y-box protein 1. Interacts with MYOCD and SRF. Expressed in muscle cells and in the liver.

It localises to the nucleus. Functionally, transcriptional regulator which can act as an activator or a repressor. Represses the transcription of ACTA2 in fibroblasts and smooth muscle cells via its ability to interact with the purine-rich strand of a MCAT- containing element in the 5' flanking region of the gene. Represses the transcription of MYOCD, capable of repressing all isoforms of MYOCD but the magnitude of the repressive effects is most notable for the SMC- specific isoforms. Promotes hepatic glucose production by activating the transcription of ADCY6, leading to cAMP accumulation, increased PKA activity, CREB activation, and increased transcription of PCK1 and G6PC genes. Has capacity to bind repeated elements in single-stranded DNA such as the purine-rich single strand of the PUR element located upstream of the MYC gene. Participates in transcriptional and translational regulation of alpha-MHC expression in cardiac myocytes by binding to the purine-rich negative regulatory (PNR) element. Modulates constitutive liver galectin-3 gene transcription by binding to its promoter. May play a role in the dendritic transport of a subset of mRNAs. The chain is Transcriptional regulator protein Pur-beta (Purb) from Rattus norvegicus (Rat).